Reading from the N-terminus, the 115-residue chain is Ribonuclease P protein component (115 aa).

Belongs to the RnpA family. Consists of a catalytic RNA component (M1 or rnpB) and a protein subunit.

It catalyses the reaction Endonucleolytic cleavage of RNA, removing 5'-extranucleotides from tRNA precursor.. Its function is as follows. RNaseP catalyzes the removal of the 5'-leader sequence from pre-tRNA to produce the mature 5'-terminus. It can also cleave other RNA substrates such as 4.5S RNA. The protein component plays an auxiliary but essential role in vivo by binding to the 5'-leader sequence and broadening the substrate specificity of the ribozyme. The polypeptide is Ribonuclease P protein component (Staphylococcus aureus (strain Mu3 / ATCC 700698)).